The following is a 686-amino-acid chain: UvrABC system protein C (686 aa).

Residues 1–14 show a composition bias toward basic and acidic residues; it reads MVHDSTDDPDDTRV. Residues 1-48 are disordered; the sequence is MVHDSTDDPDDTRVRKSRRGTALDAPPQETAPPDLDPATTGGDDEDDA. Positions 81–160 constitute a GIY-YIG domain; that stretch reads TSPGVYRMLN…IKQLRPRFNV (80 aa). The UVR domain maps to 270–305; sequence HAVKQELAGEMEKAANELEFETAALYRDRLAALSAI.

It belongs to the UvrC family. As to quaternary structure, interacts with UvrB in an incision complex.

It is found in the cytoplasm. Functionally, the UvrABC repair system catalyzes the recognition and processing of DNA lesions. UvrC both incises the 5' and 3' sides of the lesion. The N-terminal half is responsible for the 3' incision and the C-terminal half is responsible for the 5' incision. This is UvrABC system protein C from Bradyrhizobium diazoefficiens (strain JCM 10833 / BCRC 13528 / IAM 13628 / NBRC 14792 / USDA 110).